The sequence spans 867 residues: Alanine--tRNA ligase (867 aa).

Residues His555, His559, Cys657, and His661 each contribute to the Zn(2+) site.

This sequence belongs to the class-II aminoacyl-tRNA synthetase family. The cofactor is Zn(2+).

The protein resides in the cytoplasm. It catalyses the reaction tRNA(Ala) + L-alanine + ATP = L-alanyl-tRNA(Ala) + AMP + diphosphate. Functionally, catalyzes the attachment of alanine to tRNA(Ala) in a two-step reaction: alanine is first activated by ATP to form Ala-AMP and then transferred to the acceptor end of tRNA(Ala). Also edits incorrectly charged Ser-tRNA(Ala) and Gly-tRNA(Ala) via its editing domain. This Psychromonas ingrahamii (strain DSM 17664 / CCUG 51855 / 37) protein is Alanine--tRNA ligase.